The following is a 178-amino-acid chain: Ribosome maturation factor RimM (178 aa).

A PRC barrel domain is found at 101-178; that stretch reads DGEYYWYQLQ…EMQVDWDADF (78 aa).

It belongs to the RimM family. As to quaternary structure, binds ribosomal protein uS19.

The protein localises to the cytoplasm. In terms of biological role, an accessory protein needed during the final step in the assembly of 30S ribosomal subunit, possibly for assembly of the head region. Essential for efficient processing of 16S rRNA. May be needed both before and after RbfA during the maturation of 16S rRNA. It has affinity for free ribosomal 30S subunits but not for 70S ribosomes. The chain is Ribosome maturation factor RimM from Stutzerimonas stutzeri (strain A1501) (Pseudomonas stutzeri).